A 1679-amino-acid chain; its full sequence is Protein MLP2 (1679 aa).

4 coiled-coil regions span residues 32 to 176 (AKFE…KYDT), 233 to 466 (YNKF…RQVK), 516 to 1064 (FSNV…EREL), and 1099 to 1491 (KLVS…ENAG). 3 short sequence motifs (bipartite nuclear localization signal) span residues 417-433 (KRST…KRKQ), 639-655 (RKEL…KKTT), and 1433-1449 (KKEW…RRIK). Disordered regions lie at residues 1495-1521 (FLDN…SERP) and 1632-1679 (DLTN…ASNE). Composition is skewed to polar residues over residues 1511–1520 (NSPSKGNSER) and 1646–1661 (IGST…TSSD). Serine 1512 carries the post-translational modification Phosphoserine. Residues 1662 to 1671 (PDTKKVKESP) are compositionally biased toward basic and acidic residues. A Phosphoserine modification is found at serine 1670.

As to quaternary structure, component of the nuclear complex (NPC). NPC constitutes the exclusive means of nucleocytoplasmic transport. NPCs allow the passive diffusion of ions and small molecules and the active, nuclear transport receptor-mediated bidirectional transport of macromolecules such as proteins, RNAs, ribonucleoparticles (RNPs), and ribosomal subunits across the nuclear envelope. Due to its 8-fold rotational symmetry, all subunits are present with 8 copies or multiples thereof. Interacts with NUP60 and NIC96, which tether it to the nuclear pore complex. Component of the spindle pole body core in which it interacts directly with SPC110, SPC42 and SPC29. Also interacts with YKU70 (HDF1) and MLP1.

Its subcellular location is the nucleus. It is found in the cytoplasm. The protein localises to the cytoskeleton. It localises to the microtubule organizing center. The protein resides in the spindle pole body. Its subcellular location is the nuclear pore complex. Its function is as follows. Together with the closely related MLP1, involved in the structural and functional organization of perinuclear chromatin. MLP1/MLP2 associate with the nuclear pore complex and form filamentous structures along the nuclear periphery. Has a role in the localization of Esc1 to nucleolar regions. Together with MLP1, mediates tethering of the some telomeres to the nuclear periphery, probably mediated by YKU70/YKU80 (HDF1/HDF2) heterodimer and show perinuclear location dependent silencing. MLP1 and MLP2 are involved in telomere length regulation but not silencing or telomere anchoring. Plays a role in the incorporation of components into the spindle pole body. Involved in double-strand break repair, probably also mediated by the YKU70/YKU80 (HDF1/HDF2) heterodimer. This Saccharomyces cerevisiae (strain ATCC 204508 / S288c) (Baker's yeast) protein is Protein MLP2 (MLP2).